The following is an 85-amino-acid chain: U4-theraphotoxin-Hhn1o (85 aa).

A signal peptide spans 1-22 (MKVTLIAILTCAAVLVLHTTAA). Positions 23 to 48 (EELEAESQLMEVGMPDTELAAVDEER) are excised as a propeptide. Intrachain disulfides connect Cys52–Cys66, Cys56–Cys77, and Cys71–Cys82.

Belongs to the neurotoxin 12 (Hwtx-2) family. 02 (Hwtx-2) subfamily. As to expression, expressed by the venom gland.

The protein resides in the secreted. Its function is as follows. Postsynaptic neurotoxin. This chain is U4-theraphotoxin-Hhn1o, found in Cyriopagopus hainanus (Chinese bird spider).